We begin with the raw amino-acid sequence, 1103 residues long: Voltage-dependent calcium channel subunit alpha-2/delta-1 (1103 aa).

The first 24 residues, 1–24, serve as a signal peptide directing secretion; the sequence is MAAGCLLALTLTLFQSLLIGPSSE. The Extracellular segment spans residues 25–1073; that stretch reads EPFPSAVTIK…VLEDYTDCGG (1049 aa). N-linked (GlcNAc...) asparagine glycosylation occurs at Asn92. Ser119 bears the Phosphoserine mark. 2 N-linked (GlcNAc...) asparagine glycosylation sites follow: Asn136 and Asn184. The VWFA domain occupies 253–430; the sequence is DMLILVDVSG…INTQEYLDVL (178 aa). Residues Asp259, Ser261, and Ser263 each contribute to the a divalent metal cation site. The MIDAS-like motif signature appears at 259–263; sequence DVSGS. N-linked (GlcNAc...) asparagine glycosylation is found at Asn324, Asn348, Asn468, Asn475, Asn604, Asn613, Asn675, Asn781, Asn824, Asn888, Asn895, Asn985, and Asn998. Cys404 and Cys1059 form a disulfide bridge. The region spanning 446-556 is the Cache domain; that stretch reads WTNVYLDALE…NIQNPKSQEP (111 aa). The chain crosses the membrane as a helical span at residues 1074–1094; the sequence is VSGLNPSLWYIIGIQFLLLWL. The Cytoplasmic segment spans residues 1095–1103; it reads VSGSTHRLL.

This sequence belongs to the calcium channel subunit alpha-2/delta family. Dimer formed of alpha-2-1 and delta-1 chains; disulfide-linked. Voltage-dependent calcium channels are multisubunit complexes, consisting of alpha-1 (CACNA1), alpha-2 (CACNA2D), beta (CACNB) and delta (CACNA2D) subunits in a 1:1:1:1 ratio. Proteolytically processed into subunits alpha-2-1 and delta-1 that are disulfide-linked. As to expression, isoform 1 is expressed in skeletal muscle. Isoform 2 is expressed in the central nervous system. Isoform 2, isoform 4 and isoform 5 are expressed in neuroblastoma cells. Isoform 3, isoform 4 and isoform 5 are expressed in the aorta.

It localises to the membrane. The protein resides in the cell membrane. Functionally, the alpha-2/delta subunit of voltage-dependent calcium channels regulates calcium current density and activation/inactivation kinetics of the calcium channel. Plays an important role in excitation-contraction coupling. The polypeptide is Voltage-dependent calcium channel subunit alpha-2/delta-1 (CACNA2D1) (Homo sapiens (Human)).